A 397-amino-acid chain; its full sequence is Tryptophan synthase beta chain (397 aa).

K90 carries the post-translational modification N6-(pyridoxal phosphate)lysine.

The protein belongs to the TrpB family. As to quaternary structure, tetramer of two alpha and two beta chains. Pyridoxal 5'-phosphate serves as cofactor.

The enzyme catalyses (1S,2R)-1-C-(indol-3-yl)glycerol 3-phosphate + L-serine = D-glyceraldehyde 3-phosphate + L-tryptophan + H2O. It functions in the pathway amino-acid biosynthesis; L-tryptophan biosynthesis; L-tryptophan from chorismate: step 5/5. The beta subunit is responsible for the synthesis of L-tryptophan from indole and L-serine. The protein is Tryptophan synthase beta chain of Nitrosomonas europaea (strain ATCC 19718 / CIP 103999 / KCTC 2705 / NBRC 14298).